The primary structure comprises 123 residues: Large ribosomal subunit protein uL29 (123 aa).

This sequence belongs to the universal ribosomal protein uL29 family. As to quaternary structure, component of the large ribosomal subunit.

Its subcellular location is the cytoplasm. Its function is as follows. Component of the large ribosomal subunit. The ribosome is a large ribonucleoprotein complex responsible for the synthesis of proteins in the cell. The sequence is that of Large ribosomal subunit protein uL29 (rpl35) from Hippocampus comes (Tiger tail seahorse).